Consider the following 347-residue polypeptide: Protein NDL3 (347 aa).

The protein belongs to the NDRG family. In terms of assembly, interacts with the heterodimers formed by GB1 and GG1, or GB1 and GG2. Interacts with RGS1.

It localises to the cytoplasm. Involved in a signaling pathway that modulates root auxin transport and auxin gradients. Acts partially by positively regulating the auxin carrier PIN2 and AUX1. Acts, together with GB1 as positive regulator of meristem initiation and branching. GB1 and NDL3 positively regulate basipetal inflorescence auxin transport and modulate MAX2 expression in shoots, which regulates organ and lateral meristem formation by the establishment and maintenance of auxin gradients. The chain is Protein NDL3 from Arabidopsis thaliana (Mouse-ear cress).